We begin with the raw amino-acid sequence, 686 residues long: Cadmium, zinc and cobalt-transporting ATPase (686 aa).

Positions 1–62 (MQEYHIHNLD…FIKQNEPHLS (62 aa)) constitute an HMA domain. Over 1–72 (MQEYHIHNLD…LSFKEATEKP (72 aa)) the chain is Cytoplasmic. Residues C11 and C14 each coordinate Cd(2+). Residues C11 and C14 each contribute to the Co(2+) site. Positions 11 and 14 each coordinate Zn(2+). The chain crosses the membrane as a helical span at residues 73 to 92 (LSFTPLIITIMVFLGAILIL). Residues 93–102 (HLNPSPLIEK) are Extracellular-facing. A helical membrane pass occupies residues 103 to 124 (AMFFVLALVYLVSGKDVILGAF). The Cytoplasmic segment spans residues 125 to 131 (RGLRKGQ). A helical membrane pass occupies residues 132–151 (FFDENALMLIATIAAFFVGA). At 152–154 (YEE) the chain is on the extracellular side. A helical membrane pass occupies residues 155–174 (SVSIMVFYSAGEFLQKLAVS). The Cytoplasmic segment spans residues 175-308 (RSKKSLKALV…ITKFSRYYTP (134 aa)). A helical transmembrane segment spans residues 309–327 (SVLFIALMIAVLPPLFSMG). Topologically, residues 328–332 (SFDEW) are extracellular. Residues 333–350 (IYRGLVALMVSCPCALVI) form a helical membrane-spanning segment. Over 351–635 (SVPLGYFGGV…VLAIAKKTKS (285 aa)) the chain is Cytoplasmic. D388 (4-aspartylphosphate intermediate) is an active-site residue. Mg(2+) is bound by residues D583 and D587. A helical transmembrane segment spans residues 636–657 (IIWQNILFALGIKAVFIVLGLM). Residues 658–665 (GVASLWEA) lie on the Extracellular side of the membrane. Residues 666 to 681 (VFGDVGVTLLALANSM) form a helical membrane-spanning segment. Topologically, residues 682-686 (RAMRA) are cytoplasmic.

It belongs to the cation transport ATPase (P-type) (TC 3.A.3) family. Type IB subfamily.

The protein localises to the cell membrane. It catalyses the reaction Zn(2+)(in) + ATP + H2O = Zn(2+)(out) + ADP + phosphate + H(+). The catalysed reaction is Cd(2+)(in) + ATP + H2O = Cd(2+)(out) + ADP + phosphate + H(+). Its function is as follows. Couples the hydrolysis of ATP with the transport of cadmium, zinc and cobalt out of the cell. This ion efflux may influence the activity of urease, which is essential for the survival of the bacterium in the gastric environment. The sequence is that of Cadmium, zinc and cobalt-transporting ATPase (cadA) from Helicobacter pylori (strain ATCC 700392 / 26695) (Campylobacter pylori).